A 280-amino-acid chain; its full sequence is Large ribosomal subunit protein uL2 (280 aa).

2 disordered regions span residues 1 to 25 (MGIR…AEVT) and 230 to 280 (HPHG…SGRG). Positions 257 to 280 (KTRKRRKPSSKFIIRRRKTASGRG) are enriched in basic residues.

Belongs to the universal ribosomal protein uL2 family. As to quaternary structure, part of the 50S ribosomal subunit. Forms a bridge to the 30S subunit in the 70S ribosome.

One of the primary rRNA binding proteins. Required for association of the 30S and 50S subunits to form the 70S ribosome, for tRNA binding and peptide bond formation. It has been suggested to have peptidyltransferase activity; this is somewhat controversial. Makes several contacts with the 16S rRNA in the 70S ribosome. The chain is Large ribosomal subunit protein uL2 from Gloeobacter violaceus (strain ATCC 29082 / PCC 7421).